The sequence spans 523 residues: ATP synthase subunit alpha (523 aa).

An ATP-binding site is contributed by 179-186; it reads GDRQTGKT.

Belongs to the ATPase alpha/beta chains family. In terms of assembly, F-type ATPases have 2 components, CF(1) - the catalytic core - and CF(0) - the membrane proton channel. CF(1) has five subunits: alpha(3), beta(3), gamma(1), delta(1), epsilon(1). CF(0) has three main subunits: a(1), b(2) and c(9-12). The alpha and beta chains form an alternating ring which encloses part of the gamma chain. CF(1) is attached to CF(0) by a central stalk formed by the gamma and epsilon chains, while a peripheral stalk is formed by the delta and b chains.

It localises to the cell inner membrane. The enzyme catalyses ATP + H2O + 4 H(+)(in) = ADP + phosphate + 5 H(+)(out). In terms of biological role, produces ATP from ADP in the presence of a proton gradient across the membrane. The alpha chain is a regulatory subunit. In Vibrio parahaemolyticus serotype O3:K6 (strain RIMD 2210633), this protein is ATP synthase subunit alpha.